We begin with the raw amino-acid sequence, 545 residues long: Putative transcription factor ecdB (545 aa).

Positions 12-39 form a DNA-binding region, zn(2)-C6 fungal-type; that stretch reads CDACRSRRVKCDGQRPSCMGCLSRGLDC. Residues 79–99 form a disordered region; sequence PPPVLLASARPSSNPLSSHED.

The protein resides in the nucleus. The sequence is that of Putative transcription factor ecdB from Aspergillus rugulosus (Emericella rugulosa).